We begin with the raw amino-acid sequence, 257 residues long: Small ribosomal subunit protein uS3 (257 aa).

In terms of domain architecture, KH type-2 spans 39–112 (IRKFLNKKYN…EIVFNVVEVR (74 aa)). A disordered region spans residues 217 to 257 (HEELRKERQSSASSNHGGGKRRPSRKGPRRSQEDAATEGGN). The span at 234-245 (GGKRRPSRKGPR) shows a compositional bias: basic residues.

It belongs to the universal ribosomal protein uS3 family. As to quaternary structure, part of the 30S ribosomal subunit. Forms a tight complex with proteins S10 and S14.

Functionally, binds the lower part of the 30S subunit head. Binds mRNA in the 70S ribosome, positioning it for translation. The protein is Small ribosomal subunit protein uS3 of Haploplasma axanthum (Acholeplasma axanthum).